The following is a 344-amino-acid chain: MDQYSILGRIGEGAHGIVFKAKHIETGETVALKKVALRRLEDGIPNQALREIKALQEIEDNQYVVKLKDVFPHGTGFVLVFEYMLSDLSEVIRNSQRPLTASQVKSYMMMLLKGVAFCHENSIMHRDLKPANLLISSTGHLKIADFGLARLFSNEGDRLYSHQVATRWYRAPELLYGARKYDEGVDLWAVGCIFGELLNNSPLFPGENDIEQLCCVLRVLGTPNQKVWPEITELPDYNKITFKENPPIPLEEIVPDTSPQAVDLLKKFLVYPSKQRISARQALLHPYFFTDPLPAHHSELPIPQRGGKHSRQRMQPPHEFTVDRPLHESVVDPSLIQKHAMSCS.

In terms of domain architecture, Protein kinase spans 4–288 (YSILGRIGEG…ARQALLHPYF (285 aa)). ATP is bound by residues 10 to 18 (IGEGAHGIV) and lysine 33. Aspartate 127 acts as the Proton acceptor in catalysis.

Belongs to the protein kinase superfamily. CMGC Ser/Thr protein kinase family. CDC2/CDKX subfamily. As to quaternary structure, monomer. Interacts with tbc1d32.

The protein localises to the nucleus. Its subcellular location is the cytoplasm. It is found in the cell projection. The protein resides in the cilium. It carries out the reaction L-seryl-[protein] + ATP = O-phospho-L-seryl-[protein] + ADP + H(+). It catalyses the reaction L-threonyl-[protein] + ATP = O-phospho-L-threonyl-[protein] + ADP + H(+). Its function is as follows. Involved in cell growth. Activates cdk2, a kinase involved in the control of the cell cycle, by phosphorylating residue 'Thr-160'. Required for high-level Shh responses in the developing neural tube. Together with tbc1d32, controls the structure of the primary cilium by coordinating assembly of the ciliary membrane and axoneme, allowing gli2 to be properly activated in response to SHH signaling. This chain is Cyclin-dependent kinase 20 (cdk20), found in Danio rerio (Zebrafish).